A 73-amino-acid polypeptide reads, in one-letter code: Protein BP4C (73 aa).

In terms of tissue distribution, pollen specific.

The protein is Protein BP4C (BP4C) of Brassica napus (Rape).